The following is a 424-amino-acid chain: MIENNELYLQTLGQNAKQASYGLASLTGTQKKALLSAIAASLTAKSQAILAANQKDVAAARENGLSEAMIDRLLLDDARLKGVISDIDNVISLNDPVGTELESQLLDNGLRLSRRRVPLGVIGVIYEARPNVTVDIAVLALKTGNAVILRGGKETLNSNMALSEAIREAITEQGLAADSVQLIKSPDRTLVSGLLKLDQFVDMIVPRGGQNLQRLCAEQATIPVILGGIGICHLYMDKDANIAKSIEVIANAKVQRPTVCNALDTVLIHDSLAETALPQLFSNLSAQGVSFYGCEQTKAIADKLGLAISTATDETYGQEWLSLTLGIKVVADIDTAIGHIRRYSSGHSEGILTDNIHASAHFINQVDSAAVYVNASTRFTDGGQFGLGAEVAVSTQKLHARGPMGLEALTTYKWIGLGEYTVRG.

The protein belongs to the gamma-glutamyl phosphate reductase family.

Its subcellular location is the cytoplasm. The catalysed reaction is L-glutamate 5-semialdehyde + phosphate + NADP(+) = L-glutamyl 5-phosphate + NADPH + H(+). It participates in amino-acid biosynthesis; L-proline biosynthesis; L-glutamate 5-semialdehyde from L-glutamate: step 2/2. Catalyzes the NADPH-dependent reduction of L-glutamate 5-phosphate into L-glutamate 5-semialdehyde and phosphate. The product spontaneously undergoes cyclization to form 1-pyrroline-5-carboxylate. This is Gamma-glutamyl phosphate reductase from Shewanella woodyi (strain ATCC 51908 / MS32).